A 317-amino-acid polypeptide reads, in one-letter code: Glycine--tRNA ligase alpha subunit (317 aa).

Belongs to the class-II aminoacyl-tRNA synthetase family. In terms of assembly, tetramer of two alpha and two beta subunits.

Its subcellular location is the cytoplasm. The catalysed reaction is tRNA(Gly) + glycine + ATP = glycyl-tRNA(Gly) + AMP + diphosphate. The protein is Glycine--tRNA ligase alpha subunit of Cupriavidus metallidurans (strain ATCC 43123 / DSM 2839 / NBRC 102507 / CH34) (Ralstonia metallidurans).